A 519-amino-acid polypeptide reads, in one-letter code: Golgi-associated kinase 1B (519 aa).

The Cytoplasmic segment spans residues 1–37; that stretch reads MTCPDKPGQLINWFICSLCVPRVRKLWSSRRPRTRRN. A helical; Signal-anchor for type II membrane protein membrane pass occupies residues 38–55; sequence LLLGTACAIYLGFLVSQV. The Extracellular segment spans residues 56–519; it reads GRASLQHGQA…HGVKVLPMNE (464 aa). The segment at 62-103 is disordered; the sequence is HGQAAEKGPHRSRDTAEPSFPEIPLDGTLAPPESQGNGSTLQ. A compositionally biased stretch (basic and acidic residues) spans 68–77; the sequence is KGPHRSRDTA. N289 carries N-linked (GlcNAc...) asparagine glycosylation.

It belongs to the GASK family.

The protein localises to the golgi apparatus membrane. This chain is Golgi-associated kinase 1B, found in Homo sapiens (Human).